Consider the following 404-residue polypeptide: Deoxyguanosinetriphosphate triphosphohydrolase-like protein (404 aa).

The tract at residues 1 to 33 (MSVGMAAPRAAFSCDPDRSRGRQFAEPPSSNRS) is disordered. The HD domain maps to 69–217 (RLTHSLEVAQ…AALADDIAYD (149 aa)).

It belongs to the dGTPase family. Type 2 subfamily.

The chain is Deoxyguanosinetriphosphate triphosphohydrolase-like protein from Rhodopseudomonas palustris (strain HaA2).